Here is a 152-residue protein sequence, read N- to C-terminus: 3-dehydroquinate dehydratase (152 aa).

The active-site Proton acceptor is Tyr26. Residues Asn78, His84, and Asp91 each contribute to the substrate site. His104 serves as the catalytic Proton donor. Residues 105 to 106 and Arg115 contribute to the substrate site; that span reads LS.

It belongs to the type-II 3-dehydroquinase family. In terms of assembly, homododecamer.

It carries out the reaction 3-dehydroquinate = 3-dehydroshikimate + H2O. Its pathway is metabolic intermediate biosynthesis; chorismate biosynthesis; chorismate from D-erythrose 4-phosphate and phosphoenolpyruvate: step 3/7. In terms of biological role, catalyzes a trans-dehydration via an enolate intermediate. The chain is 3-dehydroquinate dehydratase from Idiomarina loihiensis (strain ATCC BAA-735 / DSM 15497 / L2-TR).